The sequence spans 1022 residues: Sodium/potassium-transporting ATPase subunit alpha-1 (1022 aa).

Positions 1–5 (MGRGT) are excised as a propeptide. Residues 1–10 (MGRGTGHDQY) show a composition bias toward basic and acidic residues. The segment at 1–34 (MGRGTGHDQYELAATSEGGRKKKRDKKKKDMDDL) is disordered. The Cytoplasmic portion of the chain corresponds to 6–86 (GHDQYELAAT…NALTPPPTTP (81 aa)). Residue serine 16 is modified to Phosphoserine; by PKC. Positions 81–83 (PPP) are interaction with phosphoinositide-3 kinase. The chain crosses the membrane as a helical span at residues 87–107 (EWVKFCRQLFGGFSMLLWIGA). Over 108–130 (ILCFLAYGIQAASEDEPANDNLY) the chain is Extracellular. A helical transmembrane segment spans residues 131 to 151 (LGVVLSAVVIITGCFSYYQEA). Residues 152–287 (KSSRIMDSFK…VGRTPISIEI (136 aa)) are Cytoplasmic-facing. Residues 213-234 (DNSSLTGESEPQTRSPDFSNEN) are disordered. The helical transmembrane segment at 288-307 (EHFIHIITGVAVFLGVSFFI) threads the bilayer. Residues 308 to 319 (LSLILGYAWLEA) are Extracellular-facing. Residues 320 to 337 (VIFLIGIIVANVPEGLLA) form a helical membrane-spanning segment. At 338–771 (TVTVCLTLTA…EEGRLIFDNL (434 aa)) the chain is on the cytoplasmic side. Aspartate 375 serves as the catalytic 4-aspartylphosphate intermediate. Lysine 486 contributes to the ATP binding site. Aspartate 716 and aspartate 720 together coordinate Mg(2+). The helical transmembrane segment at 772–791 (KKSIAYTLTSNIPEITPFLL) threads the bilayer. Residues 792–801 (FIIANIPLPL) are Extracellular-facing. The helical transmembrane segment at 802-822 (GTVTILCIDLGTDMVPAISLA) threads the bilayer. Over 823-842 (YEAAESDIMKRQPRNPRTDK) the chain is Cytoplasmic. Residues 843–865 (LVNERLISIAYGQIGMMQATAGF) form a helical membrane-spanning segment. At 866-917 (FTYFVILAENGFLPSTLLGIRVKWDDKYVNDLEDSYGQQWTYEQRKIVEYTC) the chain is on the extracellular side. Residues 918-937 (HTSFFASIVIVQWADLIICK) form a helical membrane-spanning segment. At 938-950 (TRRNSIIQQGMKN) the chain is on the cytoplasmic side. Phosphoserine; by PKA is present on serine 942. A helical transmembrane segment spans residues 951–969 (KILIFGLFEETALAAFLSY). Over 970–984 (CPGMDVALRMYPLKP) the chain is Extracellular. The chain crosses the membrane as a helical span at residues 985–1005 (SWWFCAFPYSLLIFLYDEARR). The Cytoplasmic portion of the chain corresponds to 1006 to 1022 (FILRRNPDGWVERETYY).

The protein belongs to the cation transport ATPase (P-type) (TC 3.A.3) family. Type IIC subfamily. In terms of assembly, the sodium/potassium-transporting ATPase is composed of a catalytic alpha subunit, an auxiliary non-catalytic beta subunit and an additional regulatory subunit.

Its subcellular location is the cell membrane. It is found in the sarcolemma. It catalyses the reaction K(+)(out) + Na(+)(in) + ATP + H2O = K(+)(in) + Na(+)(out) + ADP + phosphate + H(+). In terms of biological role, this is the catalytic component of the active enzyme, which catalyzes the hydrolysis of ATP coupled with the exchange of sodium and potassium ions across the plasma membrane. This action creates the electrochemical gradient of sodium and potassium ions, providing the energy for active transport of various nutrients. In Anguilla anguilla (European freshwater eel), this protein is Sodium/potassium-transporting ATPase subunit alpha-1 (atp1a1).